The sequence spans 103 residues: G0/G1 switch protein 2 (103 aa).

The disordered stretch occupies residues 80 to 103 (LQEKGKQQDTVLGGRALSNRQHAS).

In terms of assembly, directly interacts with BCL2; this interaction prevents the formation of the anti-apoptotic BAX-BCL2 complex. Widely expressed with highest levels in peripheral blood, skeletal muscle and heart, followed by kidney and liver.

It is found in the mitochondrion. Functionally, promotes apoptosis by binding to BCL2, hence preventing the formation of protective BCL2-BAX heterodimers. This chain is G0/G1 switch protein 2 (G0S2), found in Homo sapiens (Human).